Consider the following 82-residue polypeptide: MSDKIRTLQGRVTSNKMDKSITVAIERQVKHPLYGKYIKRTTKIHAHDETNQCNEGDVVTISQCRPLSKTKSWALVEVVTKA.

This sequence belongs to the universal ribosomal protein uS17 family. Part of the 30S ribosomal subunit.

One of the primary rRNA binding proteins, it binds specifically to the 5'-end of 16S ribosomal RNA. The sequence is that of Small ribosomal subunit protein uS17 from Shewanella denitrificans (strain OS217 / ATCC BAA-1090 / DSM 15013).